The primary structure comprises 214 residues: Probable GTP-binding protein EngB (214 aa).

The 179-residue stretch at 25–203 (EGAEVAFAGR…EQVITGWLNL (179 aa)) folds into the EngB-type G domain. GTP-binding positions include 33–40 (GRSNAGKS), 60–64 (GRTQL), 80–83 (DLPG), 147–150 (TKSD), and 182–184 (FSS). Mg(2+)-binding residues include Ser-40 and Thr-62.

The protein belongs to the TRAFAC class TrmE-Era-EngA-EngB-Septin-like GTPase superfamily. EngB GTPase family. Requires Mg(2+) as cofactor.

In terms of biological role, necessary for normal cell division and for the maintenance of normal septation. The polypeptide is Probable GTP-binding protein EngB (Teredinibacter turnerae (strain ATCC 39867 / T7901)).